We begin with the raw amino-acid sequence, 32 residues long: SLGGFLKGVGKALAGVGKVVADQFGNLLQAGQ.

Q32 carries the glutamine amide modification.

Expressed by the skin glands.

It is found in the secreted. Its function is as follows. Antimicrobial peptide. The chain is Dermatoxin-J1 from Phasmahyla jandaia (Jandaia leaf frog).